We begin with the raw amino-acid sequence, 504 residues long: Immunoglobulin-binding protein EibC (504 aa).

The first 26 residues, 1-26 (MSKKFTMTLLSSSLAGLLVMSGGVSA), serve as a signal peptide directing secretion. A surface exposed passenger domain region spans residues 27–413 (QEEKYTVPYA…IAANTRTLQQ (387 aa)). Residues 27–453 (QEEKYTVPYA…GLFQPYSVGK (427 aa)) lie on the Extracellular side of the membrane. Positions 154–280 (DAKASGEFSV…TGTESDKTYG (127 aa)) are head domain. The tract at residues 281 to 296 (TRVLGGLSDGTRNSDA) is neck. The segment at 297–342 (ATVGQLNRKVGGVYDDVKARITVESEKQKKYTDQKTSEVNEKVEAR) is right-handed coiled-coil (RHcc). The segment at 343-368 (TTVGVDSDGKLTRAEGATKTIAVNDG) is saddle domain. Positions 369-434 (LVALSGRTDR…INENHKEMKR (66 aa)) are left-handed coiled-coil (LHcc). Positions 411 to 438 (LQQHSARLDSQQRQINENHKEMKRAAAQ) form a coiled coil. The segment at 411 to 453 (LQQHSARLDSQQRQINENHKEMKRAAAQSAALTGLFQPYSVGK) is outer membrane translocation of the passenger domain. Beta stranded transmembrane passes span 454-464 (FNATAAVGGYS), 467-478 (QALAVGVGYRFN), 481-490 (TAAKAGVAFS), and 494-504 (ASWNVGVNFEF). Residues 454 to 504 (FNATAAVGGYSDQQALAVGVGYRFNEQTAAKAGVAFSDGDASWNVGVNFEF) form a translocator domain region.

The protein belongs to the autotransporter-2 (AT-2) (TC 1.B.40) family. Eib subfamily. Homotrimer; can probably form mixed heterotrimers in vivo. Will form mixed heterotrimers with EibD; these are correctly located in the outer membrane and bind IgG Fc, although less well than homotrimers. In denaturing gels runs as a band of about 200 kDa. Binds the Fc portion of immunoglobulins; binds more than 1 Fc per subunit.

Its subcellular location is the cell surface. The protein resides in the cell outer membrane. In terms of biological role, binds (in a non-immune fashion) to the Fc portion of human IgG and less well to IgA; binding occurs on the cell surface. Confers the ability to survive exposure to human serum exposure. Binds to the Fc portion of human IgG and IgA and to whole mouse antibodies also via Fc. The protein is Immunoglobulin-binding protein EibC of Escherichia coli.